The sequence spans 203 residues: MSEFTKEHFATNVYYDRTFDRDAAKILPGEYYYTGKDMLIVTVLGSCVSACIRDRVTGVGGMNHFMLPDSGADADSPVSASARYGTYAMEVLINDLLKAGAKRENLEAKVFGGGAVLRGFIAMNVGERNAQFVRDFLKVEGIRIIAEDLNDIHPRKVYYFPRSGKVLVKKLKQLNNNTLVNREQDYANRLQSNNVAGDIELFS.

Belongs to the CheD family.

The catalysed reaction is L-glutaminyl-[protein] + H2O = L-glutamyl-[protein] + NH4(+). In terms of biological role, probably deamidates glutamine residues to glutamate on methyl-accepting chemotaxis receptors (MCPs), playing an important role in chemotaxis. The sequence is that of Probable chemoreceptor glutamine deamidase CheD from Herminiimonas arsenicoxydans.